Consider the following 108-residue polypeptide: Small ribosomal subunit protein uS17 (108 aa).

It belongs to the universal ribosomal protein uS17 family. As to quaternary structure, part of the 30S ribosomal subunit.

One of the primary rRNA binding proteins, it binds specifically to the 5'-end of 16S ribosomal RNA. This chain is Small ribosomal subunit protein uS17, found in Methanoculleus marisnigri (strain ATCC 35101 / DSM 1498 / JR1).